Reading from the N-terminus, the 370-residue chain is Type II restriction enzyme MjaII (370 aa).

Belongs to the TdeIII type II restriction endonuclease family.

It carries out the reaction Endonucleolytic cleavage of DNA to give specific double-stranded fragments with terminal 5'-phosphates.. In terms of biological role, a P subtype restriction enzyme that recognizes the double-stranded sequence 5'-GGNCC-3'; the cleavage site is unknown. The chain is Type II restriction enzyme MjaII (mjaIIR) from Methanocaldococcus jannaschii (strain ATCC 43067 / DSM 2661 / JAL-1 / JCM 10045 / NBRC 100440) (Methanococcus jannaschii).